Here is a 266-residue protein sequence, read N- to C-terminus: HLA class II histocompatibility antigen, DRB1 beta chain (266 aa).

Positions 1–29 (MVCLKLPGGSCMTALTVTLMVLSSPLALS) are cleaved as a signal peptide. Positions 30–124 (GDTRPRFLWQ…VESFTVQRRV (95 aa)) are beta-1. The Extracellular segment spans residues 30-227 (GDTRPRFLWQ…RARSESAQSK (198 aa)). Cys44 and Cys108 are disulfide-bonded. Asn48 carries an N-linked (GlcNAc...) asparagine glycan. A peptide antigen is bound by residues Asp86, Trp90, His110, Asn111, and Arg122. The segment at 125-227 (QPKVTVYPSK…RARSESAQSK (103 aa)) is beta-2. Residues 126–214 (PKVTVYPSKT…EHPSVTSPLT (89 aa)) form the Ig-like C1-type domain. Residues Cys146 and Cys202 are joined by a disulfide bond. Residues 228–248 (MLSGVGGFVLGLLFLGAGLFI) form a helical membrane-spanning segment. The Cytoplasmic segment spans residues 249–266 (YFRNQKGHSGLQPTGFLS). Residue Lys254 forms a Glycyl lysine isopeptide (Lys-Gly) (interchain with G-Cter in ubiquitin) linkage.

As to quaternary structure, heterotrimer that consists of an alpha chain HLA-DRA, a beta chain HLA-DRB1 and a peptide (peptide-MHCII). Newly synthesized alpha and beta chains forms a heterodimer (MHCII) that associates with the CD74/invariant chain (Ii) in the endoplasmic reticulum (ER). Ii is a trimer composed of three subunits and each subunit interacts with one MHCII dimer, blocking the peptide-binding cleft. As a result, MHCII molecules cannot bind peptides present in the ER. The complex of MHCII and CD74/Ii is transported in vesicles from ER to Golgi to lysosomes, where it encounters antigenic peptides generated via proteolysis of endocytosed antigens. MHCII dimers are dissociated from CD74/Ii by the combined action of proteolysis and HLA-DM. Lysosomal enzymes such as cathepsin, degrade CD74/Ii leaving a 24 amino acid remnant called class II-associated Ii or CLIP. Interacts (via the peptide binding cleft) with CLIP; this interaction inhibits antigen peptide binding before entry in the endosomal compartment. The displacement of CLIP and replacement by a high affinity peptide in lysosomes is performed by HLA-DM heterodimer. HLA-DM catalyzes CLIP dissociation from MHCII, stabilizes empty MHCII and mediates the selection of high affinity peptides. Interacts with HLA-DM heterodimer; this interaction is direct. Interacts with TCR (via CDR3). Interacts (via beta-2 domain) with CD4 coreceptor (via Ig-like V-type domain); this interaction is of exceptionally low affinity yet necessary for optimal recognition of antigenic peptides. In terms of assembly, (Microbial infection) Interacts with Staphylococcus aureus enterotoxin A/entA, enterotoxin B/entB, enterotoxin C1/entC1, enterotoxin D/entD and enterotoxin H/entH. Enterotoxins bind outside the peptide-binding cleft of MHCII: enterotoxin H/entH interacts via the beta-1 domain of MHCII and in a zinc-dependent way, whereas enterotoxin B/entB interacts primarily via the alpha-1 domain. (Microbial infection) Interacts with Epstein-Barr virus gp42 protein. Ubiquitinated by MARCHF1 and MARCHF8 at Lys-254 leading to sorting into the endosome system and down-regulation of MHCII. In terms of tissue distribution, expressed in professional APCs: monocyte/macrophages, dendritic cells and B cells (at protein level). Expressed in thymic epithelial cells (at protein level).

Its subcellular location is the cell membrane. The protein resides in the endoplasmic reticulum membrane. The protein localises to the lysosome membrane. It localises to the late endosome membrane. It is found in the autolysosome membrane. Functionally, a beta chain of antigen-presenting major histocompatibility complex class II (MHCII) molecule. In complex with the alpha chain HLA-DRA, displays antigenic peptides on professional antigen presenting cells (APCs) for recognition by alpha-beta T cell receptor (TCR) on HLA-DRB1-restricted CD4-positive T cells. This guides antigen-specific T-helper effector functions, both antibody-mediated immune response and macrophage activation, to ultimately eliminate the infectious agents and transformed cells. Typically presents extracellular peptide antigens of 10 to 30 amino acids that arise from proteolysis of endocytosed antigens in lysosomes. In the tumor microenvironment, presents antigenic peptides that are primarily generated in tumor-resident APCs likely via phagocytosis of apoptotic tumor cells or macropinocytosis of secreted tumor proteins. Presents peptides derived from intracellular proteins that are trapped in autolysosomes after macroautophagy, a mechanism especially relevant for T cell selection in the thymus and central immune tolerance. The selection of the immunodominant epitopes follows two processing modes: 'bind first, cut/trim later' for pathogen-derived antigenic peptides and 'cut first, bind later' for autoantigens/self-peptides. The anchor residue at position 1 of the peptide N-terminus, usually a large hydrophobic residue, is essential for high affinity interaction with MHCII molecules. In terms of biological role, allele DRB1*01:01: Displays an immunodominant epitope derived from Bacillus anthracis pagA/protective antigen, PA (KLPLYISNPNYKVNVYAVT), to both naive and PA-specific memory CD4-positive T cells. Presents immunodominant HIV-1 gag peptide (FRDYVDRFYKTLRAEQASQE) on infected dendritic cells for recognition by TRAV24-TRBV2 TCR on CD4-positive T cells and controls viral load. May present to T-helper 1 cells several HRV-16 epitopes derived from capsid proteins VP1 (PRFSLPFLSIASAYYMFYDG) and VP2 (PHQFINLRSNNSATLIVPYV), contributing to viral clearance. Displays commonly recognized peptides derived from IAV external protein HA (PKYVKQNTLKLAT and SNGNFIAPEYAYKIVK) and from internal proteins M, NP and PB1, with M-derived epitope (GLIYNRMGAVTTEV) being the most immunogenic. Presents a self-peptide derived from COL4A3 (GWISLWKGFSF) to TCR (TRAV14 biased) on CD4-positive, FOXP3-positive regulatory T cells and mediates immune tolerance to self. May present peptides derived from oncofetal trophoblast glycoprotein TPBG 5T4, known to be recognized by both T-helper 1 and regulatory T cells. Displays with low affinity a self-peptide derived from MBP (VHFFKNIVTPRTP). Its function is as follows. Allele DRB1*03:01: May present to T-helper 1 cells an HRV-16 epitope derived from capsid protein VP2 (NEKQPSDDNWLNFDGTLLGN), contributing to viral clearance. Displays self-peptides derived from retinal SAG (NRERRGIALDGKIKHE) and thyroid TG (LSSVVVDPSIRHFDV). Presents viral epitopes derived from HHV-6B gH/U48 and U85 antigens to polyfunctional CD4-positive T cells with cytotoxic activity implicated in control of HHV-6B infection. Presents several immunogenic epitopes derived from C.tetani neurotoxin tetX, playing a role in immune recognition and long-term protection. Allele DRB1*04:01: Presents an immunodominant bacterial epitope derived from M.tuberculosis esxB/culture filtrate antigen CFP-10 (EISTNIRQAGVQYSR), eliciting CD4-positive T cell effector functions such as IFNG production and cytotoxic activity. May present to T-helper 1 cells an HRV-16 epitope derived from capsid protein VP2 (NEKQPSDDNWLNFDGTLLGN), contributing to viral clearance. Presents tumor epitopes derived from melanoma-associated TYR antigen (QNILLSNAPLGPQFP and DYSYLQDSDPDSFQD), triggering CD4-positive T cell effector functions such as GMCSF production. Displays preferentially citrullinated self-peptides derived from VIM (GVYATR/citSSAVR and SAVRAR/citSSVPGVR) and ACAN (VVLLVATEGR/ CitVRVNSAYQDK). Displays self-peptides derived from COL2A1. Functionally, allele DRB1*04:02: Displays native or citrullinated self-peptides derived from VIM. In terms of biological role, allele DRB1*04:04: May present to T-helper 1 cells several HRV-16 epitopes derived from capsid proteins VP1 (HIVMQYMYVPPGAPIPTTRN) and VP2 (RGDSTITSQDVANAVVGYGV), contributing to viral clearance. Displays preferentially citrullinated self-peptides derived from VIM (SAVRAR/citSSVPGVR). Its function is as follows. Allele DRB1*04:05: May present to T-helper 1 cells an immunogenic epitope derived from tumor-associated antigen WT1 (KRYFKLSHLQMHSRKH), likely providing for effective antitumor immunity in a wide range of solid and hematological malignancies. Allele DRB1*05:01: Presents an immunodominant HIV-1 gag peptide (FRDYVDRFYKTLRAEQASQE) on infected dendritic cells for recognition by TRAV24-TRBV2 TCR on CD4-positive T cells and controls viral load. Functionally, allele DRB1*07:01: Upon EBV infection, presents latent antigen EBNA2 peptide (PRSPTVFYNIPPMPLPPSQL) to CD4-positive T cells, driving oligoclonal expansion and selection of a dominant virus-specific memory T cell subset with cytotoxic potential to directly eliminate virus-infected B cells. May present to T-helper 1 cells several HRV-16 epitopes derived from capsid proteins VP1 (PRFSLPFLSIASAYYMFYDG) and VP2 (VPYVNAVPMDSMVRHNNWSL), contributing to viral clearance. In the context of tumor immunesurveillance, may present to T-helper 1 cells an immunogenic epitope derived from tumor-associated antigen WT1 (MTEYKLVVVGAVGVGKSALTIQLI), likely providing for effective antitumor immunity in a wide range of solid and hematological malignancies. In metastatic epithelial tumors, presents to intratumoral CD4-positive T cells a KRAS neoantigen (MTEYKLVVVGAVGVGKSALTIQLI) carrying G12V hotspot driver mutation and may mediate tumor regression. In terms of biological role, allele DRB1*11:01: Displays an immunodominant HIV-1 gag peptide (FRDYVDRFYKTLRAEQASQE) on infected dendritic cells for recognition by TRAV24-TRBV2 TCR on CD4-positive T cells and controls viral load. May present to T-helper 1 cells an HRV-16 epitope derived from capsid protein VP2 (SDRIIQITRGDSTITSQDVA), contributing to viral clearance. Presents several immunogenic epitopes derived from C.tetani neurotoxin tetX, playing a role in immune recognition and longterm protection. In the context of tumor immunesurveillance, may present tumor-derived neoantigens to CD4-positive T cells and trigger anti-tumor helper functions. Its function is as follows. Allele DRB1*13:01: Presents viral epitopes derived from HHV-6B antigens to polyfunctional CD4-positive T cells implicated in control of HHV-6B infection. Allele DRB1*15:01: May present to T-helper 1 cells an HRV-16 epitope derived from capsid protein VP2 (SNNSATLIVPYVNAVPMDSM), contributing to viral clearance. Displays a self-peptide derived from MBP (ENPVVHFFKNIVTPR). May present to T-helper 1 cells an immunogenic epitope derived from tumor-associated antigen WT1 (KRYFKLSHLQMHSRKH), likely providing for effective antitumor immunity in a wide range of solid and hematological malignancies. Functionally, allele DRB1*15:02: Displays an immunodominant HIV-1 gag peptide (FRDYVDRFYKTLRAEQASQE) on infected dendritic cells for recognition by TRAV24-TRBV2 TCR on CD4-positive T cells and controls viral load. May present to T-helper 1 cells an immunogenic epitope derived from tumor-associated antigen WT1 (KRYFKLSHLQMHSRKH), likely providing for effective antitumor immunity in a wide range of solid and hematological malignancies. In terms of biological role, (Microbial infection) Acts as a receptor for Epstein-Barr virus on lymphocytes. The chain is HLA class II histocompatibility antigen, DRB1 beta chain from Homo sapiens (Human).